The chain runs to 147 residues: 3-hydroxyacyl-[acyl-carrier-protein] dehydratase FabZ (147 aa).

Histidine 46 is an active-site residue.

It belongs to the thioester dehydratase family. FabZ subfamily.

It localises to the cytoplasm. The enzyme catalyses a (3R)-hydroxyacyl-[ACP] = a (2E)-enoyl-[ACP] + H2O. Functionally, involved in unsaturated fatty acids biosynthesis. Catalyzes the dehydration of short chain beta-hydroxyacyl-ACPs and long chain saturated and unsaturated beta-hydroxyacyl-ACPs. This is 3-hydroxyacyl-[acyl-carrier-protein] dehydratase FabZ from Syntrophobacter fumaroxidans (strain DSM 10017 / MPOB).